The following is a 256-amino-acid chain: UPF0246 protein Sde_3824 (256 aa).

This sequence belongs to the UPF0246 family.

This chain is UPF0246 protein Sde_3824, found in Saccharophagus degradans (strain 2-40 / ATCC 43961 / DSM 17024).